The following is a 290-amino-acid chain: Xyloglucan endotransglucosylase/hydrolase protein 3 (290 aa).

The signal sequence occupies residues 1-21; the sequence is MDYMRIFSVFVVTLWIIRVDA. Residues 22–220 enclose the GH16 domain; it reads RVFGGRGIEK…WSYSPFIAHF (199 aa). Catalysis depends on glutamate 109, which acts as the Nucleophile. The active-site Proton donor is the glutamate 113. Xyloglucan-binding positions include glutamate 113, 126 to 128, 136 to 138, 199 to 200, and glycine 204; these read QTN, NRE, and DW. An N-linked (GlcNAc...) asparagine glycan is attached at asparagine 210. Disulfide bonds link cysteine 228-cysteine 240 and cysteine 276-cysteine 289.

Belongs to the glycosyl hydrolase 16 family. XTH group 1 subfamily. In terms of processing, contains at least one intrachain disulfide bond essential for its enzymatic activity. Predominantly expressed in flower buds.

It localises to the secreted. The protein resides in the cell wall. The protein localises to the extracellular space. Its subcellular location is the apoplast. It carries out the reaction breaks a beta-(1-&gt;4) bond in the backbone of a xyloglucan and transfers the xyloglucanyl segment on to O-4 of the non-reducing terminal glucose residue of an acceptor, which can be a xyloglucan or an oligosaccharide of xyloglucan.. Catalyzes xyloglucan endohydrolysis (XEH) and/or endotransglycosylation (XET). Cleaves and religates xyloglucan polymers, an essential constituent of the primary cell wall, and thereby participates in cell wall construction of growing tissues. This chain is Xyloglucan endotransglucosylase/hydrolase protein 3 (XTH3), found in Arabidopsis thaliana (Mouse-ear cress).